Consider the following 101-residue polypeptide: Apolipoprotein C-II (101 aa).

An N-terminal signal peptide occupies residues 1 to 22 (MGARHLLALLLVLLVLGFEVQG). The tract at residues 66–74 (TMDEKIRDM) is lipid binding. A lipoprotein lipase cofactor region spans residues 78-101 (STAAVSTYVGIFTDQLLSLLKGDE).

It belongs to the apolipoprotein C2 family. Post-translationally, proapolipoprotein C-II is synthesized as a sialic acid containing glycoprotein which is subsequently desialylated prior to its proteolytic processing. In terms of processing, proapolipoprotein C-II, the major form found in plasma undergoes proteolytic cleavage of its N-terminal hexapeptide to generate apolipoprotein C-II, which occurs as the minor form in plasma.

It localises to the secreted. Its function is as follows. Component of chylomicrons, very low-density lipoproteins (VLDL), low-density lipoproteins (LDL), and high-density lipoproteins (HDL) in plasma. Plays an important role in lipoprotein metabolism as an activator of lipoprotein lipase. Both proapolipoprotein C-II and apolipoprotein C-II can activate lipoprotein lipase. The protein is Apolipoprotein C-II (APOC2) of Tapirus indicus (Asiatic tapir).